The chain runs to 240 residues: FAS1 domain-containing protein AN1527 (240 aa).

The N-terminal stretch at 1–24 (MRQLSTTALVLFLFFYCSISTAWS) is a signal peptide. The region spanning 91–239 (EPTISDVLPK…GEVWVIDGVI (149 aa)) is the FAS1 domain.

The protein localises to the vacuole. The sequence is that of FAS1 domain-containing protein AN1527 from Emericella nidulans (strain FGSC A4 / ATCC 38163 / CBS 112.46 / NRRL 194 / M139) (Aspergillus nidulans).